The sequence spans 314 residues: 2,3-dihydroxyphenylpropionate/2,3-dihydroxicinnamic acid 1,2-dioxygenase (314 aa).

Histidine 115 serves as the catalytic Proton donor. The Proton acceptor role is filled by histidine 179.

Belongs to the LigB/MhpB extradiol dioxygenase family. Homotetramer. Fe(2+) serves as cofactor.

It carries out the reaction 3-(2,3-dihydroxyphenyl)propanoate + O2 = (2Z,4E)-2-hydroxy-6-oxonona-2,4-dienedioate + H(+). The catalysed reaction is (2E)-3-(2,3-dihydroxyphenyl)prop-2-enoate + O2 = (2Z,4E,7E)-2-hydroxy-6-oxonona-2,4,7-trienedioate + H(+). It functions in the pathway aromatic compound metabolism; 3-phenylpropanoate degradation. Its function is as follows. Catalyzes the non-heme iron(II)-dependent oxidative cleavage of 2,3-dihydroxyphenylpropionic acid and 2,3-dihydroxicinnamic acid into 2-hydroxy-6-ketononadienedioate and 2-hydroxy-6-ketononatrienedioate, respectively. In Rhodococcus jostii (strain RHA1), this protein is 2,3-dihydroxyphenylpropionate/2,3-dihydroxicinnamic acid 1,2-dioxygenase.